Reading from the N-terminus, the 148-residue chain is Putative adenylate kinase (148 aa).

ATP contacts are provided by G9, G11, K12, S13, and T14. The segment at 28–44 (EGNALAVKYGCLSGDEV) is NMP. Residues 91–101 (DRGYSPEKIDE) are LID. R92 is a binding site for ATP.

The protein belongs to the adenylate kinase family. AK6 subfamily. As to quaternary structure, interacts with uS11. Not a structural component of 40S pre-ribosomes, but transiently interacts with them by binding to uS11.

The enzyme catalyses AMP + ATP = 2 ADP. It carries out the reaction ATP + H2O = ADP + phosphate + H(+). Its function is as follows. Broad-specificity nucleoside monophosphate (NMP) kinase that catalyzes the reversible transfer of the terminal phosphate group between nucleoside triphosphates and monophosphates. Also has ATPase activity. Involved in the late maturation steps of the 30S ribosomal particles, specifically 16S rRNA maturation. While NMP activity is not required for ribosome maturation, ATPase activity is. Associates transiently with small ribosomal subunit protein uS11. ATP hydrolysis breaks the interaction with uS11. May temporarily remove uS11 from the ribosome to enable a conformational change of the ribosomal RNA that is needed for the final maturation step of the small ribosomal subunit. The protein is Putative adenylate kinase of Thermoplasma acidophilum (strain ATCC 25905 / DSM 1728 / JCM 9062 / NBRC 15155 / AMRC-C165).